A 137-amino-acid chain; its full sequence is Protein E6 (137 aa).

2 zinc fingers span residues 17–53 (CLWCREPLTEVDAFRCMVKDFHVVIREGCRYGACTIC) and 90–127 (CCYCGGKLTKNEKHRHVLFNEPFCKTRANIIRGRCYDC).

Belongs to the papillomaviridae E6 protein family. As to quaternary structure, forms homodimers. Interacts with ubiquitin-protein ligase UBE3A/E6-AP; this interaction stimulates UBE3A ubiquitin activity. Interacts with host BAK1. Interacts with human FBLN1.

Its subcellular location is the host cytoplasm. The protein localises to the host nucleus. Functionally, plays a major role in the induction and maintenance of cellular transformation. E6 associates with host UBE3A/E6-AP ubiquitin-protein ligase and modulates its activity. Protects host keratinocytes from apoptosis by mediating the degradation of host BAK1. May also inhibit host immune response. The protein is Protein E6 of Bos taurus (Bovine).